A 392-amino-acid polypeptide reads, in one-letter code: Bifunctional enzyme Fae/Hps (392 aa).

The interval 1–161 (MFQIGEALMG…EESNKSTHAI (161 aa)) is formaldehyde-activating enzyme. The active-site Proton donor is the His-17. Substrate contacts are provided by Asp-19, Leu-48, Lys-66, Thr-68, and Gln-83. The 3-hexulose-6-phosphate synthase stretch occupies residues 162–392 (MGFKVTRLWD…IDQFRVMTDF (231 aa)).

The protein in the N-terminal section; belongs to the formaldehyde-activating enzyme family. In the C-terminal section; belongs to the HPS/KGPDC family. HPS subfamily.

The catalysed reaction is 5,6,7,8-tetrahydromethanopterin + formaldehyde = 5,10-methylenetetrahydromethanopterin + H2O. It catalyses the reaction D-ribulose 5-phosphate + formaldehyde = D-arabino-hex-3-ulose 6-phosphate. It participates in carbohydrate biosynthesis; D-ribose 5-phosphate biosynthesis. Catalyzes the condensation of formaldehyde with tetrahydromethanopterin (H(4)MPT) to 5,10-methylenetetrahydromethanopterin. Functionally, catalyzes the reversible formation of ribulose-5-phosphate and formaldehyde from 3-hexulose-6-phosphate. This Methanosarcina acetivorans (strain ATCC 35395 / DSM 2834 / JCM 12185 / C2A) protein is Bifunctional enzyme Fae/Hps.